The following is a 441-amino-acid chain: Probable pyridine nucleotide-disulfide oxidoreductase RclA (441 aa).

33-43 (EQSNAMYGGTC) contributes to the FAD binding site. A disulfide bridge connects residues Cys-43 and Cys-48. The active-site Proton acceptor is the His-426.

This sequence belongs to the class-I pyridine nucleotide-disulfide oxidoreductase family. FAD is required as a cofactor.

Probably involved in reactive chlorine species (RCS) stress resistance. This is Probable pyridine nucleotide-disulfide oxidoreductase RclA (rclA) from Escherichia coli (strain K12).